The chain runs to 230 residues: Cyclin-dependent kinase inhibitor rum1 (230 aa).

Disordered stretches follow at residues 1–25, 43–118, and 188–230; these read MEPS…SFKG, PESD…DGLY, and SRVP…NLLR. The residue at position 13 (threonine 13) is a Phosphothreonine; by MAPK. Serine 19 is subject to Phosphoserine; by MAPK. 2 positions are modified to phosphothreonine; by cdc2: threonine 58 and threonine 62. The interval 67–147 is CDK inhibitory and cyclin-binding; the sequence is LLPNLMLQDR…TFKPKLLFAD (81 aa). A compositionally biased stretch (basic and acidic residues) spans 78-91; sequence NSLERCMEEDREHN. Positions 93–102 are enriched in polar residues; the sequence is FLSSSDNQLL. Residues 101-230 form a required for activity as a cdc2 kinase inhibitor region; it reads LLSRKKRKPT…KDENRHNLLR (130 aa). The span at 188 to 199 shows a compositional bias: low complexity; sequence SRVPSSSSGSFV. Residues 219–230 show a composition bias toward basic and acidic residues; it reads NTKDENRHNLLR.

In terms of assembly, interacts with cdc13, cig2 and pop1. Post-translationally, phosphorylated by cig1-associated cdc2 which leads to increased stability. Phosphorylation by MAPK reduces cdc2 kinase inhibitor ability.

The protein localises to the nucleus. Its function is as follows. Regulator of cell cycle G1 phase progression. Ensures the correct sequence of S phase and mitosis in the cell by acting as an inhibitor of the cdc2 mitotic kinase. Probably interacts with cdc2 to inhibit its action until the cell mass for Start is reached. Determines the length of the pre-Start G1 period and prevents mitosis from happening in early G1 cells. Required for maintaining pheromone-induced G1 arrest. Acts as an adapter protein since interaction with cdc13 promotes cyclin proteolysis during G1. Becomes a target for degradation at the G1/S phase transition, following phosphorylation by cig1-associated cdc2 at the G1/S phase transition. This chain is Cyclin-dependent kinase inhibitor rum1 (rum1), found in Schizosaccharomyces pombe (strain 972 / ATCC 24843) (Fission yeast).